An 848-amino-acid polypeptide reads, in one-letter code: MWLQLGLPSLSLSPTPTVGRSLCLILWFLSLVLRASTQAPAPTVNTHFGKLRGARVPLPSEILGPVDQYLGVPYAAPPIGEKRFLPPEPPPSWSGIRNATHFPPVCPQNIHTAVPEVMLPVWFTANLDIVATYIQEPNEDCLYLNVYVPTEDVKRISKECARKPNKKICRKGGSGAKKQGEDLADNDGDEDEDIRDSGAKPVMVYIHGGSYMEGTGNMIDGSVLASYGNVIVITLNYRVGVLGFLSTGDQAAKGNYGLLDQIQALRWVSENIAFFGGDPRRITVFGSGIGASCVSLLTLSHHSEGLFQRAIIQSGSALSSWAVNYQPVKYTSLLADKVGCNVLDTVDMVDCLRQKSAKELVEQDIQPARYHVAFGPVIDGDVIPDDPEILMEQGEFLNYDIMLGVNQGEGLKFVEGVVDPEDGVSGTDFDYSVSNFVDNLYGYPEGKDTLRETIKFMYTDWADRDNPETRRKTLVALFTDHQWVEPSVVTADLHARYGSPTYFYAFYHHCQSLMKPAWSDAAHGDEVPYVFGVPMVGPTDLFPCNFSKNDVMLSAVVMTYWTNFAKTGDPNKPVPQDTKFIHTKANRFEEVAWSKYNPRDQLYLHIGLKPRVRDHYRATKVAFWKHLVPHLYNLHDMFHYTSTTTKVPPPDTTHSSHITRRPNGKTWSTKRPAISPAYSNENAPGSWNGDQDAGPLLVENPRDYSTELSVTIAVGASLLFLNVLAFAALYYRKDKRRQEPLRQPSPQRGTGAPELGTAPEEELAALQLGPTHHECEAGPPHDTLRLTALPDYTLTLRRSPDDIPLMTPNTITMIPNSLVGLQTLHPYNTFAAGFNSTGLPNSHSTTRV.

The first 37 residues, 1 to 37 (MWLQLGLPSLSLSPTPTVGRSLCLILWFLSLVLRAST), serve as a signal peptide directing secretion. Topologically, residues 38–709 (QAPAPTVNTH…NPRDYSTELS (672 aa)) are extracellular. Residue Asn-98 is glycosylated (N-linked (GlcNAc...) asparagine). Cys-106 and Cys-141 form a disulfide bridge. The disordered stretch occupies residues 169 to 195 (CRKGGSGAKKQGEDLADNDGDEDEDIR). The span at 182 to 194 (DLADNDGDEDEDI) shows a compositional bias: acidic residues. 2 cysteine pairs are disulfide-bonded: Cys-340-Cys-351 and Cys-510-Cys-544. N-linked (GlcNAc...) asparagine glycosylation occurs at Asn-545. 2 stretches are compositionally biased toward polar residues: residues 645–656 (TKVPPPDTTHSS) and 677–689 (AYSN…SWNG). Positions 645 to 691 (TKVPPPDTTHSSHITRRPNGKTWSTKRPAISPAYSNENAPGSWNGDQ) are disordered. The helical transmembrane segment at 710 to 730 (VTIAVGASLLFLNVLAFAALY) threads the bilayer. At 731 to 848 (YRKDKRRQEP…LPNSHSTTRV (118 aa)) the chain is on the cytoplasmic side. At Ser-745 the chain carries Phosphoserine. Tyr-792 is modified (phosphotyrosine).

Belongs to the type-B carboxylesterase/lipase family. Homodimer, and heterodimer with NLGN1 and NLGN2. Interacts with neurexins NRXN1, NRXN2 and NRXN3. Interaction with neurexins is mediated by heparan sulfate glycan modification on neurexin. Interacts (via its C-terminus) with DLG4/PSD-95 (via PDZ domain 3). Post-translationally, the N-terminus is blocked. Detected in brain and on hippocampus neurons, especially at excitatory synapses. Detected in retina (at protein level). Expressed in brain, spinal cord and dorsal root ganglion.

The protein resides in the cell membrane. It is found in the synapse. Cell surface protein involved in cell-cell-interactions via its interactions with neurexin family members. Plays a role in synapse function and synaptic signal transmission, and probably mediates its effects by recruiting and clustering other synaptic proteins. May promote the initial formation of synapses, but is not essential for this. May also play a role in glia-glia or glia-neuron interactions in the developing peripheral nervous system. This is Neuroligin-3 (Nlgn3) from Rattus norvegicus (Rat).